Reading from the N-terminus, the 585-residue chain is Zinc finger protein 614 (585 aa).

The KRAB domain occupies 8-79 (LTLEDVAVEF…DAKIQNKNCP (72 aa)). The C2H2-type 1; atypical zinc finger occupies 205–227 (HACIECEQTFLRKSQLIYHENIC). Residues 257 to 281 (KICIPNEYRKGSTVKSSLITHQQTH) form a C2H2-type 2; degenerate zinc finger. 10 consecutive C2H2-type zinc fingers follow at residues 287–309 (YMCSECGKGFTMKRYLIAHQRTH), 315–337 (YVCKECGKGFTVKSNLIVHQRTH), 343–365 (YICSECGKGFTMKRYLVVHQRTH), 371–393 (YMCSECGKGFTVKSNLIVHQRSH), 399–421 (YICSECGKGFTVKRTLVIHQRTH), 427–449 (YICNECGKGFTTKRTLIIHQRTH), 455–477 (YECNECGKAFSQKICLIQHERCH), 483–505 (FVCTECGKSYSHKYGLITHQRIH), 511–533 (YECNECGKAFTTKSVLNVHQRTH), and 539–561 (YGCSDCEKAFSHLSNLVKHKKMH).

The protein belongs to the krueppel C2H2-type zinc-finger protein family.

Its subcellular location is the nucleus. Its function is as follows. May be involved in transcriptional regulation. The sequence is that of Zinc finger protein 614 (ZNF614) from Homo sapiens (Human).